Reading from the N-terminus, the 75-residue chain is Cruzioseptin-8 (75 aa).

The first 22 residues, 1 to 22 (MAFLKKCLFLVLFLGLVSLSIC), serve as a signal peptide directing secretion. The propeptide occupies 23–43 (EEEKREEENEEVQEDDDQSEE). The segment at 25–44 (EKREEENEEVQEDDDQSEEK) is disordered. Acidic residues predominate over residues 30 to 41 (ENEEVQEDDDQS). Residue Gln-72 is modified to Glutamine amide. Residues 74-75 (EQ) constitute a propeptide that is removed on maturation.

As to expression, expressed by the skin glands.

It localises to the secreted. In terms of biological role, has antimicrobial activity. This chain is Cruzioseptin-8, found in Cruziohyla calcarifer (Splendid leaf frog).